Consider the following 460-residue polypeptide: Light-independent protochlorophyllide reductase subunit N (460 aa).

[4Fe-4S] cluster is bound by residues C20, C45, and C105.

This sequence belongs to the BchN/ChlN family. Protochlorophyllide reductase is composed of three subunits; ChlL, ChlN and ChlB. Forms a heterotetramer of two ChlB and two ChlN subunits. Requires [4Fe-4S] cluster as cofactor.

Its subcellular location is the plastid. The protein resides in the chloroplast. It carries out the reaction chlorophyllide a + oxidized 2[4Fe-4S]-[ferredoxin] + 2 ADP + 2 phosphate = protochlorophyllide a + reduced 2[4Fe-4S]-[ferredoxin] + 2 ATP + 2 H2O. It functions in the pathway porphyrin-containing compound metabolism; chlorophyll biosynthesis (light-independent). Component of the dark-operative protochlorophyllide reductase (DPOR) that uses Mg-ATP and reduced ferredoxin to reduce ring D of protochlorophyllide (Pchlide) to form chlorophyllide a (Chlide). This reaction is light-independent. The NB-protein (ChlN-ChlB) is the catalytic component of the complex. The protein is Light-independent protochlorophyllide reductase subunit N of Adiantum capillus-veneris (Maidenhair fern).